The primary structure comprises 90 residues: Putative sodium channel toxin Ts35 (90 aa).

An N-terminal signal peptide occupies residues Gln-1–Ala-22. Positions Lys-23–Leu-87 constitute an LCN-type CS-alpha/beta domain. 4 disulfides stabilise this stretch: Cys-33/Cys-86, Cys-37/Cys-61, Cys-46/Cys-66, and Cys-50/Cys-68.

The protein belongs to the long (4 C-C) scorpion toxin superfamily. Sodium channel inhibitor family. Expressed by the venom gland.

It localises to the secreted. Its function is as follows. Putative sodium channel toxin. The sequence is that of Putative sodium channel toxin Ts35 from Tityus serrulatus (Brazilian scorpion).